The chain runs to 244 residues: Aspartate/glutamate leucyltransferase (244 aa).

The protein belongs to the R-transferase family. Bpt subfamily.

The protein localises to the cytoplasm. It catalyses the reaction N-terminal L-glutamyl-[protein] + L-leucyl-tRNA(Leu) = N-terminal L-leucyl-L-glutamyl-[protein] + tRNA(Leu) + H(+). The catalysed reaction is N-terminal L-aspartyl-[protein] + L-leucyl-tRNA(Leu) = N-terminal L-leucyl-L-aspartyl-[protein] + tRNA(Leu) + H(+). Functions in the N-end rule pathway of protein degradation where it conjugates Leu from its aminoacyl-tRNA to the N-termini of proteins containing an N-terminal aspartate or glutamate. The protein is Aspartate/glutamate leucyltransferase of Bordetella parapertussis (strain 12822 / ATCC BAA-587 / NCTC 13253).